The chain runs to 82 residues: Probable [Fe-S]-dependent transcriptional repressor (82 aa).

Iron-sulfur cluster contacts are provided by C56, C61, C64, and C71.

This sequence belongs to the FeoC family.

Functionally, may function as a transcriptional regulator that controls feoABC expression. The chain is Probable [Fe-S]-dependent transcriptional repressor from Yersinia enterocolitica serotype O:8 / biotype 1B (strain NCTC 13174 / 8081).